We begin with the raw amino-acid sequence, 652 residues long: DNA ligase (652 aa).

NAD(+)-binding positions include 29–33 (DSEYD), 78–79 (SL), and Glu107. The N6-AMP-lysine intermediate role is filled by Lys109. Residues Arg130, Glu164, Lys278, and Lys302 each coordinate NAD(+). 4 residues coordinate Zn(2+): Cys395, Cys398, Cys413, and Cys418. Positions 577–652 (VADAALSGLT…VRDEAWLESL (76 aa)) constitute a BRCT domain.

It belongs to the NAD-dependent DNA ligase family. LigA subfamily. It depends on Mg(2+) as a cofactor. Mn(2+) is required as a cofactor.

The catalysed reaction is NAD(+) + (deoxyribonucleotide)n-3'-hydroxyl + 5'-phospho-(deoxyribonucleotide)m = (deoxyribonucleotide)n+m + AMP + beta-nicotinamide D-nucleotide.. In terms of biological role, DNA ligase that catalyzes the formation of phosphodiester linkages between 5'-phosphoryl and 3'-hydroxyl groups in double-stranded DNA using NAD as a coenzyme and as the energy source for the reaction. It is essential for DNA replication and repair of damaged DNA. The chain is DNA ligase from Streptococcus pneumoniae serotype 2 (strain D39 / NCTC 7466).